The primary structure comprises 523 residues: GMP synthase [glutamine-hydrolyzing] (523 aa).

Positions 8 to 205 (KILILDFGSQ…VVDICGCETN (198 aa)) constitute a Glutamine amidotransferase type-1 domain. Cys-85 functions as the Nucleophile in the catalytic mechanism. Residues His-179 and Glu-181 contribute to the active site. The 193-residue stretch at 206-398 (WTAENIIEDA…LGLPAEMLNR (193 aa)) folds into the GMPS ATP-PPase domain. 233 to 239 (SGGVDSS) lines the ATP pocket.

In terms of assembly, homodimer.

The catalysed reaction is XMP + L-glutamine + ATP + H2O = GMP + L-glutamate + AMP + diphosphate + 2 H(+). The protein operates within purine metabolism; GMP biosynthesis; GMP from XMP (L-Gln route): step 1/1. In terms of biological role, catalyzes the synthesis of GMP from XMP. The polypeptide is GMP synthase [glutamine-hydrolyzing] (Histophilus somni (strain 2336) (Haemophilus somnus)).